A 238-amino-acid chain; its full sequence is Purine nucleoside phosphorylase DeoD-type (238 aa).

Histidine 4 provides a ligand contact to a purine D-ribonucleoside. Phosphate contacts are provided by residues glycine 20, arginine 24, arginine 43, and 87-90; that span reads RVGS. A purine D-ribonucleoside-binding positions include 179–181 and 203–204; these read EME and SD. Aspartate 204 acts as the Proton donor in catalysis.

It belongs to the PNP/UDP phosphorylase family. In terms of assembly, homohexamer; trimer of homodimers.

The catalysed reaction is a purine D-ribonucleoside + phosphate = a purine nucleobase + alpha-D-ribose 1-phosphate. It catalyses the reaction a purine 2'-deoxy-D-ribonucleoside + phosphate = a purine nucleobase + 2-deoxy-alpha-D-ribose 1-phosphate. Functionally, catalyzes the reversible phosphorolytic breakdown of the N-glycosidic bond in the beta-(deoxy)ribonucleoside molecules, with the formation of the corresponding free purine bases and pentose-1-phosphate. This is Purine nucleoside phosphorylase DeoD-type from Mannheimia succiniciproducens (strain KCTC 0769BP / MBEL55E).